Here is a 340-residue protein sequence, read N- to C-terminus: Glycerol-3-phosphate dehydrogenase [NAD(P)+] (340 aa).

NADPH-binding residues include S13, Y14, and K108. Sn-glycerol 3-phosphate-binding residues include K108, G137, and T139. A141 provides a ligand contact to NADPH. 5 residues coordinate sn-glycerol 3-phosphate: K193, D246, S256, R257, and N258. Residue K193 is the Proton acceptor of the active site. R257 contacts NADPH. 2 residues coordinate NADPH: I281 and E283.

This sequence belongs to the NAD-dependent glycerol-3-phosphate dehydrogenase family.

Its subcellular location is the cytoplasm. It catalyses the reaction sn-glycerol 3-phosphate + NAD(+) = dihydroxyacetone phosphate + NADH + H(+). The enzyme catalyses sn-glycerol 3-phosphate + NADP(+) = dihydroxyacetone phosphate + NADPH + H(+). It participates in membrane lipid metabolism; glycerophospholipid metabolism. In terms of biological role, catalyzes the reduction of the glycolytic intermediate dihydroxyacetone phosphate (DHAP) to sn-glycerol 3-phosphate (G3P), the key precursor for phospholipid synthesis. The chain is Glycerol-3-phosphate dehydrogenase [NAD(P)+] from Bartonella quintana (strain Toulouse) (Rochalimaea quintana).